A 438-amino-acid polypeptide reads, in one-letter code: Histidinol dehydrogenase (438 aa).

3 residues coordinate NAD(+): Tyr129, Gln193, and Asn216. The substrate site is built by Thr239, Gln261, and His264. Residues Gln261 and His264 each coordinate Zn(2+). Active-site proton acceptor residues include Glu330 and His331. Substrate contacts are provided by His331, Asp364, Glu418, and His423. A Zn(2+)-binding site is contributed by Asp364. Residue His423 coordinates Zn(2+).

The protein belongs to the histidinol dehydrogenase family. Zn(2+) serves as cofactor.

The catalysed reaction is L-histidinol + 2 NAD(+) + H2O = L-histidine + 2 NADH + 3 H(+). The protein operates within amino-acid biosynthesis; L-histidine biosynthesis; L-histidine from 5-phospho-alpha-D-ribose 1-diphosphate: step 9/9. Functionally, catalyzes the sequential NAD-dependent oxidations of L-histidinol to L-histidinaldehyde and then to L-histidine. This Thermobifida fusca (strain YX) protein is Histidinol dehydrogenase.